The primary structure comprises 341 residues: Twinfilin-2 (341 aa).

2 consecutive ADF-H domains span residues 1 to 131 (ATEE…KHLS) and 169 to 305 (GLAF…DEVH). An N6-acetyllysine modification is found at lysine 6. Tyrosine 301 carries the phosphotyrosine modification. The disordered stretch occupies residues 314-341 (AFAKPKGPGGKRGHKRLIRGPGENGDDS). Positions 322–331 (GGKRGHKRLI) are enriched in basic residues. Position 341 is a phosphoserine (serine 341).

Belongs to the actin-binding proteins ADF family. Twinfilin subfamily. As to quaternary structure, interacts with G-actin; ADP-actin form and capping protein (CP). May also be able to interact with TWF1 and phosphoinositides, PI(4,5)P2. When bound to PI(4,5)P2, it is down-regulated. Interacts with MYO7A. Post-translationally, phosphorylated on both serine and threonine residues.

Its subcellular location is the cytoplasm. It localises to the cytoskeleton. The protein localises to the perinuclear region. It is found in the cell projection. The protein resides in the stereocilium. Functionally, actin-binding protein involved in motile and morphological processes. Inhibits actin polymerization, likely by sequestering G-actin. By capping the barbed ends of filaments, it also regulates motility. Seems to play an important role in clathrin-mediated endocytosis and distribution of endocytic organelles. May play a role in regulating the mature length of the middle and short rows of stereocilia. The polypeptide is Twinfilin-2 (TWF2) (Pongo abelii (Sumatran orangutan)).